Consider the following 197-residue polypeptide: Glycerol-3-phosphate acyltransferase (197 aa).

6 helical membrane-spanning segments follow: residues 1 to 21, 50 to 70, 77 to 97, 111 to 131, 137 to 157, and 158 to 178; these read MNILIIFASYLLGSLPTGFLI, WPALFVFIIDLGKGLIAVKIA, GLIEVIAGISAISGHIWPIWL, MFLALSWKVGLASLGFFLIVL, VSLSSISAAILLPIFMFFYLG, and KFMHSYFFISLIVALLVIWKH.

This sequence belongs to the PlsY family. In terms of assembly, probably interacts with PlsX.

It localises to the cell inner membrane. It carries out the reaction an acyl phosphate + sn-glycerol 3-phosphate = a 1-acyl-sn-glycero-3-phosphate + phosphate. The protein operates within lipid metabolism; phospholipid metabolism. Catalyzes the transfer of an acyl group from acyl-phosphate (acyl-PO(4)) to glycerol-3-phosphate (G3P) to form lysophosphatidic acid (LPA). This enzyme utilizes acyl-phosphate as fatty acyl donor, but not acyl-CoA or acyl-ACP. The sequence is that of Glycerol-3-phosphate acyltransferase from Prochlorococcus marinus (strain MIT 9301).